Here is a 472-residue protein sequence, read N- to C-terminus: UDP-N-acetylmuramate--L-alanine ligase (472 aa).

122–128 (GSHGKTT) contacts ATP.

Belongs to the MurCDEF family.

The protein localises to the cytoplasm. It carries out the reaction UDP-N-acetyl-alpha-D-muramate + L-alanine + ATP = UDP-N-acetyl-alpha-D-muramoyl-L-alanine + ADP + phosphate + H(+). It functions in the pathway cell wall biogenesis; peptidoglycan biosynthesis. In terms of biological role, cell wall formation. The protein is UDP-N-acetylmuramate--L-alanine ligase of Myxococcus xanthus (strain DK1622).